The sequence spans 240 residues: U1 small nuclear ribonucleoprotein C (240 aa).

The Matrin-type zinc-finger motif lies at 4–36; sequence YYCEYCDIYLTHSSPVGRRQHIQGRKHISAKIE. Disordered regions lie at residues 86–122 and 175–240; these read GMKH…SKYH and IDSD…SVDA. Basic and acidic residues-rich tracts occupy residues 178–194 and 203–219; these read DPVK…DNAI and DQGD…HADH. The segment covering 226–240 has biased composition (polar residues); the sequence is TDGTANGNDQVSVDA.

Belongs to the U1 small nuclear ribonucleoprotein C family. In terms of assembly, U1 snRNP is composed of the 7 core Sm proteins B/B', D1, D2, D3, E, F and G that assemble in a heptameric protein ring on the Sm site of the small nuclear RNA to form the core snRNP, and at least 3 U1 snRNP-specific proteins U1-70K, U1-A and U1-C. U1-C interacts with U1 snRNA and the 5' splice-site region of the pre-mRNA.

The protein resides in the nucleus. Functionally, component of the spliceosomal U1 snRNP, which is essential for recognition of the pre-mRNA 5' splice-site and the subsequent assembly of the spliceosome. U1-C is directly involved in initial 5' splice-site recognition for both constitutive and regulated alternative splicing. The interaction with the 5' splice-site seems to precede base-pairing between the pre-mRNA and the U1 snRNA. Stimulates commitment or early (E) complex formation by stabilizing the base pairing of the 5' end of the U1 snRNA and the 5' splice-site region. This Plasmodium vivax (strain Salvador I) protein is U1 small nuclear ribonucleoprotein C.